A 431-amino-acid chain; its full sequence is Histidine--tRNA ligase (431 aa).

Belongs to the class-II aminoacyl-tRNA synthetase family.

The protein resides in the cytoplasm. It carries out the reaction tRNA(His) + L-histidine + ATP = L-histidyl-tRNA(His) + AMP + diphosphate + H(+). This chain is Histidine--tRNA ligase (hisS), found in Pyrococcus horikoshii (strain ATCC 700860 / DSM 12428 / JCM 9974 / NBRC 100139 / OT-3).